Here is an 862-residue protein sequence, read N- to C-terminus: Glucans biosynthesis glucosyltransferase H (862 aa).

A disordered region spans residues 1–25 (MELPATSGLNAQPGNAEGTTASTRP). Over residues 7–25 (SGLNAQPGNAEGTTASTRP) the composition is skewed to polar residues. 5 helical membrane passes run 188 to 210 (RLTLLALMIAQTVAATWAMSSVL), 545 to 567 (GVMAYLSAPLWFLFLLLSTALLA), 597 to 619 (ALFSATATVLFLPKILSVLVLWA), 626 to 648 (GGAVHLALSMVIEAVFSVLAAPV), and 708 to 730 (FLWWLSPVVGALIVSILLSVFSS).

It belongs to the glycosyltransferase 2 family. OpgH subfamily.

The protein resides in the cell inner membrane. Its pathway is glycan metabolism; osmoregulated periplasmic glucan (OPG) biosynthesis. Involved in the biosynthesis of osmoregulated periplasmic glucans (OPGs). The protein is Glucans biosynthesis glucosyltransferase H of Ralstonia nicotianae (strain ATCC BAA-1114 / GMI1000) (Ralstonia solanacearum).